A 163-amino-acid chain; its full sequence is NADH-quinone oxidoreductase subunit I (163 aa).

4Fe-4S ferredoxin-type domains lie at 54–84 (LRRY…IESE) and 94–123 (TRYD…ETRI). Positions 64, 67, 70, 74, 103, 106, 109, and 113 each coordinate [4Fe-4S] cluster.

This sequence belongs to the complex I 23 kDa subunit family. NDH-1 is composed of 14 different subunits. Subunits NuoA, H, J, K, L, M, N constitute the membrane sector of the complex. The cofactor is [4Fe-4S] cluster.

Its subcellular location is the cell inner membrane. It catalyses the reaction a quinone + NADH + 5 H(+)(in) = a quinol + NAD(+) + 4 H(+)(out). Functionally, NDH-1 shuttles electrons from NADH, via FMN and iron-sulfur (Fe-S) centers, to quinones in the respiratory chain. The immediate electron acceptor for the enzyme in this species is believed to be ubiquinone. Couples the redox reaction to proton translocation (for every two electrons transferred, four hydrogen ions are translocated across the cytoplasmic membrane), and thus conserves the redox energy in a proton gradient. This chain is NADH-quinone oxidoreductase subunit I, found in Methylobacillus flagellatus (strain ATCC 51484 / DSM 6875 / VKM B-1610 / KT).